Reading from the N-terminus, the 1149-residue chain is cGMP-specific 3',5'-cyclic phosphodiesterase (1149 aa).

Composition is skewed to low complexity over residues 1 to 19 and 31 to 47; these read MHGT…DVSS and ATSS…ASSS. The segment at 1 to 175 is disordered; sequence MHGTVSRSSS…STTASQQDVD (175 aa). Positions 48 to 59 are enriched in polar residues; sequence KPLTNGANKTAI. A compositionally biased stretch (low complexity) spans 60-85; it reads STAAGVTPGAAPGPGCAAIPASGSSG. Residues 96 to 108 are compositionally biased toward polar residues; it reads QSNNNRPAGSNRS. Positions 132 to 158 are enriched in low complexity; sequence SSSSPSQSPSQSQSQSQASIQTQTSQQ. GAF domains lie at 278–430 and 462–643; these read DIDV…GIGI and NLEC…GLGI. The region spanning 673-996 is the PDEase domain; the sequence is SQDQTEKLTQ…RNWQDLAEKV (324 aa). The active-site Proton donor is the H749. A divalent metal cation is bound by residues H753, H789, D790, and D900. Disordered regions lie at residues 1037–1066 and 1096–1149; these read QQSQ…TGAL and SHVS…CALL. Basic and acidic residues-rich tracts occupy residues 1042–1053 and 1096–1106; these read GSEDSHTPEHQR and SHVSEDMDDKS. Residues 1115-1135 are compositionally biased toward low complexity; it reads ASGSMGRMSASSSTSSAGGQM. Residues 1139–1149 show a composition bias toward basic residues; the sequence is SKKRSKLCALL. Position 1146 is a cysteine methyl ester (C1146). C1146 carries S-farnesyl cysteine lipidation. Residues 1147–1149 constitute a propeptide, removed in mature form; the sequence is ALL.

The protein belongs to the cyclic nucleotide phosphodiesterase family. Interacts with PrBP. It depends on a divalent metal cation as a cofactor.

The protein localises to the cell membrane. The enzyme catalyses 3',5'-cyclic GMP + H2O = GMP + H(+). In terms of biological role, has a role regulating cGMP transport in Malpighian tubule principal cells. This is cGMP-specific 3',5'-cyclic phosphodiesterase from Drosophila yakuba (Fruit fly).